The chain runs to 201 residues: MSHDTNTVDSRTHEGQLNKLGFWIFLTAEFSLFGTLFATLLTLQHGGDYAGKMTTELFELPLVLIMTFALLISSYTCGISIYYMRKEKQNLMMFWMILTVLLGLVFVGFEIYEFAHYVSEGVTPQIGSYWSSFFILLGTHGAHVSLGIGWIICLLIQVATRGLNKYNAPKLFIVSLYWHFLDVVWIFIFTAVYMIGMVYSG.

Helical transmembrane passes span 20-40 (LGFW…FATL), 62-82 (LVLI…ISIY), 91-111 (LMMF…GFEI), 133-153 (FFIL…WIIC), and 172-192 (FIVS…FTAV).

This sequence belongs to the cytochrome c oxidase subunit 3 family.

The protein localises to the cell membrane. It catalyses the reaction 2 a quinol + O2 = 2 a quinone + 2 H2O. Functionally, catalyzes quinol oxidation with the concomitant reduction of oxygen to water. This is Probable quinol oxidase subunit 3 (qoxC) from Staphylococcus haemolyticus (strain JCSC1435).